Here is a 223-residue protein sequence, read N- to C-terminus: UPF0319 protein VPA1584 (223 aa).

The first 21 residues, 1-21 (MKLIKPLTCALALAMSGMAFA), serve as a signal peptide directing secretion.

It belongs to the UPF0319 family.

In Vibrio parahaemolyticus serotype O3:K6 (strain RIMD 2210633), this protein is UPF0319 protein VPA1584.